Reading from the N-terminus, the 342-residue chain is Dihydroorotate dehydrogenase (quinone) (342 aa).

FMN-binding positions include 61–65 (AGLDK) and Thr-85. Lys-65 provides a ligand contact to substrate. 110–114 (NRMGF) contacts substrate. FMN is bound by residues Asn-138 and Asn-171. Asn-171 serves as a coordination point for substrate. Ser-174 acts as the Nucleophile in catalysis. Position 176 (Asn-176) interacts with substrate. FMN contacts are provided by Lys-216 and Thr-244. 245-246 (NT) serves as a coordination point for substrate. FMN-binding positions include Gly-267, Gly-296, and 317–318 (YS).

This sequence belongs to the dihydroorotate dehydrogenase family. Type 2 subfamily. In terms of assembly, monomer. It depends on FMN as a cofactor.

The protein localises to the cell membrane. The catalysed reaction is (S)-dihydroorotate + a quinone = orotate + a quinol. The protein operates within pyrimidine metabolism; UMP biosynthesis via de novo pathway; orotate from (S)-dihydroorotate (quinone route): step 1/1. Its function is as follows. Catalyzes the conversion of dihydroorotate to orotate with quinone as electron acceptor. The protein is Dihydroorotate dehydrogenase (quinone) of Pseudomonas paraeruginosa (strain DSM 24068 / PA7) (Pseudomonas aeruginosa (strain PA7)).